Consider the following 130-residue polypeptide: Small ribosomal subunit protein uS8 (130 aa).

Belongs to the universal ribosomal protein uS8 family. In terms of assembly, part of the 30S ribosomal subunit.

In terms of biological role, one of the primary rRNA binding proteins, it binds directly to 16S rRNA central domain where it helps coordinate assembly of the platform of the 30S subunit. The polypeptide is Small ribosomal subunit protein uS8 (Pyrobaculum islandicum (strain DSM 4184 / JCM 9189 / GEO3)).